A 323-amino-acid chain; its full sequence is MELTGVTSQSIFDDNAADIKLSWVAGLEGADRAFDVEFAREATSAADLVGHLNLIHPNRIQVLGKPEILYYQRLDDEPRKRQMGELILLEPPFLVVADGMEPPPDLELRCTRSSTPLFTTPVSSAAVIDHLRLYLSRISAPRVTMHGVFLDILGMGVLIMGESGLGKSELGLELISRGHGLVADDAVDFVRLGPDFIEGRCPPLLQNLLEVRGLGLLDIKTIFGETAVRRKMKLKLVVQLVRRNDGEFERLPLDSQYLDVLGLPIHMVKIQVAAGRNLAVLVEAAVRNTILRLRGIDTLRDFMDRQRAAMQADVVSRGQGRLL.

Active-site residues include H146 and K167. 161 to 168 lines the ATP pocket; sequence GESGLGKS. S168 contacts Mg(2+). The Proton acceptor; for phosphorylation activity. Proton donor; for dephosphorylation activity role is filled by D185. The tract at residues 209 to 218 is important for the catalytic mechanism of both phosphorylation and dephosphorylation; that stretch reads LEVRGLGLLD. Position 210 (E210) interacts with Mg(2+). The active site involves R250. Residues 271–276 are important for the catalytic mechanism of dephosphorylation; that stretch reads QVAAGR.

It belongs to the HPrK/P family. As to quaternary structure, homohexamer. It depends on Mg(2+) as a cofactor.

The catalysed reaction is [HPr protein]-L-serine + ATP = [HPr protein]-O-phospho-L-serine + ADP + H(+). It carries out the reaction [HPr protein]-O-phospho-L-serine + phosphate + H(+) = [HPr protein]-L-serine + diphosphate. Catalyzes the ATP- as well as the pyrophosphate-dependent phosphorylation of a specific serine residue in HPr, a phosphocarrier protein of the phosphoenolpyruvate-dependent sugar phosphotransferase system (PTS). HprK/P also catalyzes the pyrophosphate-producing, inorganic phosphate-dependent dephosphorylation (phosphorolysis) of seryl-phosphorylated HPr (P-Ser-HPr). This chain is HPr kinase/phosphorylase, found in Cupriavidus metallidurans (strain ATCC 43123 / DSM 2839 / NBRC 102507 / CH34) (Ralstonia metallidurans).